The sequence spans 332 residues: Delta-aminolevulinic acid dehydratase (332 aa).

The active-site Schiff-base intermediate with substrate is Lys-199. Positions 209 and 221 each coordinate 5-aminolevulinate. Glu-237 contacts Mg(2+). The Schiff-base intermediate with substrate role is filled by Lys-252. 5-aminolevulinate-binding residues include Ser-278 and Tyr-317.

It belongs to the ALAD family. Homooctamer.

The catalysed reaction is 2 5-aminolevulinate = porphobilinogen + 2 H2O + H(+). It participates in porphyrin-containing compound metabolism; protoporphyrin-IX biosynthesis; coproporphyrinogen-III from 5-aminolevulinate: step 1/4. Catalyzes an early step in the biosynthesis of tetrapyrroles. Binds two molecules of 5-aminolevulinate per subunit, each at a distinct site, and catalyzes their condensation to form porphobilinogen. This is Delta-aminolevulinic acid dehydratase (hemB) from Chlamydia pneumoniae (Chlamydophila pneumoniae).